The following is a 370-amino-acid chain: Flagellar P-ring protein 1 (370 aa).

The first 25 residues, 1–25 (MSVLIKTRHCFVLLGLWLVLPTASA), serve as a signal peptide directing secretion.

It belongs to the FlgI family. The basal body constitutes a major portion of the flagellar organelle and consists of four rings (L,P,S, and M) mounted on a central rod.

Its subcellular location is the periplasm. The protein localises to the bacterial flagellum basal body. Its function is as follows. Assembles around the rod to form the L-ring and probably protects the motor/basal body from shearing forces during rotation. This Yersinia pestis protein is Flagellar P-ring protein 1.